Reading from the N-terminus, the 92-residue chain is Conotoxin Im9.4 (92 aa).

An N-terminal signal peptide occupies residues 1 to 20 (MHRSLAGSAVLMLLLLFALG). The propeptide occupies 21 to 62 (NFVGVQPGLVTRDADNGQLMDNRRNLRLERKTMSLFKSLDKR). Intrachain disulfides connect Cys-65/Cys-79, Cys-69/Cys-81, and Cys-75/Cys-87. Residue Asn-90 is modified to Asparagine amide.

The protein belongs to the conotoxin P superfamily. As to expression, expressed by the venom duct.

The protein localises to the secreted. In terms of biological role, probable neurotoxin that inhibits ion channels. The protein is Conotoxin Im9.4 of Conus imperialis (Imperial cone).